Consider the following 322-residue polypeptide: Protein-L-isoaspartate O-methyltransferase (322 aa).

Positions 1-101 (MSGERAKRFP…AKQGDRSAAP (101 aa)) are disordered. The span at 14-29 (EDLKREPRKPEGRVAE) shows a compositional bias: basic and acidic residues. Low complexity-rich tracts occupy residues 33-51 (AGDA…PAAA) and 67-91 (AANP…PQGG). Serine 170 is an active-site residue.

It belongs to the methyltransferase superfamily. L-isoaspartyl/D-aspartyl protein methyltransferase family.

Its subcellular location is the cytoplasm. The enzyme catalyses [protein]-L-isoaspartate + S-adenosyl-L-methionine = [protein]-L-isoaspartate alpha-methyl ester + S-adenosyl-L-homocysteine. Its function is as follows. Catalyzes the methyl esterification of L-isoaspartyl residues in peptides and proteins that result from spontaneous decomposition of normal L-aspartyl and L-asparaginyl residues. It plays a role in the repair and/or degradation of damaged proteins. The sequence is that of Protein-L-isoaspartate O-methyltransferase from Burkholderia pseudomallei (strain 668).